Here is a 1444-residue protein sequence, read N- to C-terminus: Cleavage and polyadenylation specificity factor subunit 1 (1444 aa).

4 disordered regions span residues 406 to 439 (PPAS…SKSV), 549 to 571 (EETL…DDGR), 716 to 778 (GGVR…PAPF), and 902 to 924 (FREK…EGTG). A compositionally biased stretch (basic and acidic residues) spans 413 to 422 (EAADKEEPPS). A phosphoserine mark is found at Ser-757 and Ser-767. A compositionally biased stretch (basic and acidic residues) spans 759–776 (SKEEARRSSQPPADRDPA). A Nuclear localization signal motif is present at residues 894–909 (KKVPHNINFREKKPKP).

Belongs to the CPSF1 family. Component of the cleavage and polyadenylation specificity factor (CPSF) complex, composed of CPSF1, CPSF2, CPSF3, CPSF4 and FIP1L1. Found in a complex with CPSF1, FIP1L1 and PAPOLA. Interacts with FIP1L1, TENT2/GLD2 and SRRM1. Interacts with TUT1; the interaction is direct and mediates the recruitment of the CPSF complex on the 3'UTR of selected pre-mRNAs. The N-terminus is blocked.

The protein localises to the nucleus. The protein resides in the nucleoplasm. Component of the cleavage and polyadenylation specificity factor (CPSF) complex that plays a key role in pre-mRNA 3'-end formation, recognizing the AAUAAA signal sequence and interacting with poly(A) polymerase and other factors to bring about cleavage and poly(A) addition. This subunit is involved in the RNA recognition step of the polyadenylation reaction. May play a role in eye morphogenesis and the development of retinal ganglion cell projections to the midbrain. This is Cleavage and polyadenylation specificity factor subunit 1 (CPSF1) from Bos taurus (Bovine).